Consider the following 21-residue polypeptide: Fibrinogen beta chain (21 aa).

Gln1 is subject to Pyrrolidone carboxylic acid. Over residues 1-11 (QFPTDYDEGED) the composition is skewed to acidic residues. Residues 1–21 (QFPTDYDEGEDDRPKSGLGAR) form a disordered region. Thr4 carries an O-linked (GalNAc...) threonine glycan. A Sulfotyrosine modification is found at Tyr6.

Heterohexamer; disulfide linked. Contains 2 sets of 3 non-identical chains (alpha, beta and gamma). The 2 heterotrimers are in head to head conformation with the N-termini in a small central domain. In terms of processing, conversion of fibrinogen to fibrin is triggered by thrombin, which cleaves fibrinopeptides A and B from alpha and beta chains, and thus exposes the N-terminal polymerization sites responsible for the formation of the soft clot.

It is found in the secreted. Cleaved by the protease thrombin to yield monomers which, together with fibrinogen alpha (FGA) and fibrinogen gamma (FGG), polymerize to form an insoluble fibrin matrix. Fibrin has a major function in hemostasis as one of the primary components of blood clots. In addition, functions during the early stages of wound repair to stabilize the lesion and guide cell migration during re-epithelialization. Was originally thought to be essential for platelet aggregation, based on in vitro studies using anticoagulated blood. However subsequent studies have shown that it is not absolutely required for thrombus formation in vivo. Enhances expression of SELP in activated platelets. Maternal fibrinogen is essential for successful pregnancy. Fibrin deposition is also associated with infection, where it protects against IFNG-mediated hemorrhage. May also facilitate the antibacterial immune response via both innate and T-cell mediated pathways. The protein is Fibrinogen beta chain (FGB) of Syncerus caffer (African buffalo).